The following is a 128-amino-acid chain: CD59 glycoprotein (128 aa).

An N-terminal signal peptide occupies residues 1-25 (MGIQGGSVLFGLLLVLAVFCHSGHS). The UPAR/Ly6 domain occupies 26 to 108 (LQCYNCPNPT…QLENGGTSLS (83 aa)). Disulfide bonds link cysteine 28–cysteine 51, cysteine 31–cysteine 38, and cysteine 44–cysteine 64. Asparagine 43 is a glycosylation site (N-linked (GlcNAc...) asparagine). Residue lysine 66 is glycosylated (N-linked (Glc) (glycation) lysine). Disulfide bonds link cysteine 70–cysteine 88 and cysteine 89–cysteine 94. Residues threonine 76 and threonine 77 are each glycosylated (O-linked (GalNAc...) threonine). Asparagine 102 is lipidated: GPI-anchor amidated asparagine. A propeptide spans 103 to 128 (GGTSLSEKTVLLLVTPFLAAAWSLHP) (removed in mature form).

In terms of assembly, interacts with T-cell surface antigen CD2. Post-translationally, N- and O-glycosylated. The N-glycosylation mainly consists of a family of biantennary complex-type structures with and without lactosamine extensions and outer arm fucose residues. Also significant amounts of triantennary complexes (22%). Variable sialylation also present in the Asn-43 oligosaccharide. The predominant O-glycans are mono-sialylated forms of the disaccharide, Gal-beta-1,3GalNAc, and their sites of attachment are probably on Thr-76 and Thr-77. The GPI-anchor of soluble urinary CD59 has no inositol-associated phospholipid, but is composed of seven different GPI-anchor variants of one or more monosaccharide units. Major variants contain sialic acid, mannose and glucosamine. Sialic acid linked to an N-acetylhexosamine-galactose arm is present in two variants. In terms of processing, glycated. Glycation is found in diabetic subjects, but only at minimal levels in nondiabetic subjects. Glycated CD59 lacks MAC-inhibitory function and confers to vascular complications of diabetes.

The protein resides in the cell membrane. The protein localises to the secreted. Functionally, potent inhibitor of the complement membrane attack complex (MAC) action, which protects human cells from damage during complement activation. Acts by binding to the beta-haipins of C8 (C8A and C8B) components of the assembling MAC, forming an intermolecular beta-sheet that prevents incorporation of the multiple copies of C9 required for complete formation of the osmolytic pore. In terms of biological role, the soluble form from urine retains its specific complement binding activity, but exhibits greatly reduced ability to inhibit complement membrane attack complex (MAC) assembly on cell membranes. The chain is CD59 glycoprotein from Homo sapiens (Human).